We begin with the raw amino-acid sequence, 324 residues long: Putative F-box/kelch-repeat protein At5g28160 (324 aa).

The 48-residue stretch at 7-54 (RPSFLSLPDEIILSCLARISRSYYPKLSLVCKTFRTLLISNELIVARL) folds into the F-box domain. The stretch at 170-216 (KIYVMGGCMADESVNWGEVFDIKTQTWEALPDPGPEFRFSSIRKIDV) is one Kelch repeat.

The chain is Putative F-box/kelch-repeat protein At5g28160 from Arabidopsis thaliana (Mouse-ear cress).